The chain runs to 967 residues: Mediator of RNA polymerase II transcription subunit 14 (967 aa).

This sequence belongs to the Mediator complex subunit 14 family. In terms of assembly, component of the Mediator complex.

It localises to the nucleus. Its function is as follows. Component of the Mediator complex, a coactivator involved in the regulated transcription of nearly all RNA polymerase II-dependent genes. Mediator functions as a bridge to convey information from gene-specific regulatory proteins to the basal RNA polymerase II transcription machinery. Mediator is recruited to promoters by direct interactions with regulatory proteins and serves as a scaffold for the assembly of a functional preinitiation complex with RNA polymerase II and the general transcription factors. In Eremothecium gossypii (strain ATCC 10895 / CBS 109.51 / FGSC 9923 / NRRL Y-1056) (Yeast), this protein is Mediator of RNA polymerase II transcription subunit 14 (RGR1).